The sequence spans 505 residues: MLVSLSLSSLLTLFFIMLMASGISGLLFLHPRVPLSFVRIHIGILALPLLVSLLILANSGVSGNVGPWHLDSLACLMTFFVLAIGFIIQRFSVRYLMGDRSYRKYFTLFTFTTGAASMTWLSGDLRLMVLFWGATLVGLTLLIRLNSAWQVASEAAKISGRLFLLSWFSLFFAMMWLFHATGQWQLSLVVTNESLAGLGEWERTGIQLLIVLAVIIPAAQWPFQRWLVESIVAPTPVSAIMHAGLVNAGGIILTRFSPLFHGGIASIILLLLASISVLIGTGISLVQVDYKRQLVGSTIGQMGFMLIQCALGAYIAAIIHLILHGLFKATLFLQAGSAVGRHEVSTRTNERTSYLWVMAGRILSLVIGVAFWLTAPGDGYHLISALILGWSLSVSWDQLVAFGEGRIGRIAGLTVLGGAALVYFIIHHLFYKWLHTTIFQSVQPPMSAVMIVVCLLLFGSALGTWVARHRSSVFFAVLYLWLVRLGEAKPKSVESHPDYLKQYIS.

13 helical membrane-spanning segments follow: residues 9–29 (SLLT…LLFL), 37–57 (FVRI…LILA), 68–88 (WHLD…GFII), 105–123 (YFTL…WLSG), 162–182 (LFLL…HATG), 204–224 (TGIQ…WPFQ), 231–251 (IVAP…AGGI), 259–279 (LFHG…SVLI), 303–323 (GFML…HLIL), 355–375 (LWVM…WLTA), 382–402 (LISA…LVAF), 410–430 (IAGL…HHLF), and 446–466 (MSAV…GTWV).

It belongs to the inorganic carbon transporter (TC 9.A.2) DabB family. As to quaternary structure, forms a complex with DabA.

The protein resides in the cell membrane. Part of an energy-coupled inorganic carbon pump. The protein is Probable inorganic carbon transporter subunit DabB of Bacillus subtilis (strain 168).